The following is a 71-amino-acid chain: Small ribosomal subunit protein bS21 (71 aa).

The span at Ala-48–Lys-59 shows a compositional bias: basic residues. The segment at Ala-48 to Tyr-71 is disordered. A compositionally biased stretch (basic and acidic residues) spans Leu-60–Tyr-71.

Belongs to the bacterial ribosomal protein bS21 family.

The sequence is that of Small ribosomal subunit protein bS21 from Aeromonas hydrophila subsp. hydrophila (strain ATCC 7966 / DSM 30187 / BCRC 13018 / CCUG 14551 / JCM 1027 / KCTC 2358 / NCIMB 9240 / NCTC 8049).